Here is a 131-residue protein sequence, read N- to C-terminus: Fluoride-specific ion channel FluC (131 aa).

Transmembrane regions (helical) follow at residues 4 to 24 (LWIMIGSALGGAARFWVTGFV), 30 to 50 (GIFPWGTVLINVSGSFLIGFF), 68 to 88 (LFVMIGLCGGFTTFSSFSLQT), and 104 to 124 (IALSVVFCLLAVWLGHVVAVA). Na(+)-binding residues include Gly-76 and Thr-79.

The protein belongs to the fluoride channel Fluc/FEX (TC 1.A.43) family.

It localises to the cell inner membrane. The catalysed reaction is fluoride(in) = fluoride(out). With respect to regulation, na(+) is not transported, but it plays an essential structural role and its presence is essential for fluoride channel function. Its function is as follows. Fluoride-specific ion channel. Important for reducing fluoride concentration in the cell, thus reducing its toxicity. This is Fluoride-specific ion channel FluC from Methylocella silvestris (strain DSM 15510 / CIP 108128 / LMG 27833 / NCIMB 13906 / BL2).